The chain runs to 255 residues: Gene 54 protein (255 aa).

The protein is Gene 54 protein (54) of Mycobacterium phage D29 (Mycobacteriophage D29).